Here is a 54-residue protein sequence, read N- to C-terminus: Large ribosomal subunit protein uL15 (54 aa).

Basic residues predominate over residues 1–30; the sequence is MPSRLRXTRKLRGHVSHGHGRIGKHRKHPG. The interval 1–42 is disordered; sequence MPSRLRXTRKLRGHVSHGHGRIGKHRKHPGGRGNAGGMHHHR. H39 carries the (3S)-3-hydroxyhistidine modification. At K47 the chain carries N6-acetyllysine.

Belongs to the universal ribosomal protein uL15 family. As to quaternary structure, component of the large ribosomal subunit. Hydroxylated on His-39 by MINA.

It is found in the cytoplasm. Functionally, component of the large ribosomal subunit. The ribosome is a large ribonucleoprotein complex responsible for the synthesis of proteins in the cell. This Sus scrofa (Pig) protein is Large ribosomal subunit protein uL15 (RPL27A).